A 526-amino-acid polypeptide reads, in one-letter code: Lysine--tRNA ligase (526 aa).

E431 and E438 together coordinate Mg(2+).

The protein belongs to the class-II aminoacyl-tRNA synthetase family. Homodimer. Mg(2+) is required as a cofactor.

Its subcellular location is the cytoplasm. The enzyme catalyses tRNA(Lys) + L-lysine + ATP = L-lysyl-tRNA(Lys) + AMP + diphosphate. The sequence is that of Lysine--tRNA ligase from Chlamydia trachomatis serovar L2b (strain UCH-1/proctitis).